Reading from the N-terminus, the 350-residue chain is tRNA pseudouridine synthase D (350 aa).

Residue aspartate 85 is the Nucleophile of the active site. Residues 160–310 (GVINYFGEQR…EAARRTILLR (151 aa)) form the TRUD domain.

This sequence belongs to the pseudouridine synthase TruD family.

The enzyme catalyses uridine(13) in tRNA = pseudouridine(13) in tRNA. Its function is as follows. Responsible for synthesis of pseudouridine from uracil-13 in transfer RNAs. The polypeptide is tRNA pseudouridine synthase D (Idiomarina loihiensis (strain ATCC BAA-735 / DSM 15497 / L2-TR)).